The sequence spans 400 residues: Elongation factor Tu (400 aa).

The 199-residue stretch at 10 to 208 (KPHLNVGTIG…TMDSYFPEPQ (199 aa)) folds into the tr-type G domain. Residues 19–26 (GHIDHGKT) form a G1 region. 19–26 (GHIDHGKT) contacts GTP. Thr-26 serves as a coordination point for Mg(2+). Positions 60-64 (GITIN) are G2. The G3 stretch occupies residues 81–84 (DCPG). GTP contacts are provided by residues 81–85 (DCPGH) and 136–139 (NKTD). A G4 region spans residues 136 to 139 (NKTD). A G5 region spans residues 174–176 (SAL).

The protein belongs to the TRAFAC class translation factor GTPase superfamily. Classic translation factor GTPase family. EF-Tu/EF-1A subfamily. As to quaternary structure, monomer.

It localises to the cytoplasm. The catalysed reaction is GTP + H2O = GDP + phosphate + H(+). Its function is as follows. GTP hydrolase that promotes the GTP-dependent binding of aminoacyl-tRNA to the A-site of ribosomes during protein biosynthesis. This chain is Elongation factor Tu, found in Thermosipho africanus (strain TCF52B).